The chain runs to 461 residues: Carboxypeptidase Rv3627c (461 aa).

A signal peptide spans M1–A28. The Acyl-ester intermediate role is filled by S114. K117 (proton acceptor) is an active-site residue. S295 is an active-site residue.

Belongs to the peptidase S13 family.

Its function is as follows. Carboxypeptidase that cleaves terminal D-alanine from peptidoglycan in the mycobacterial cell wall. May cleave L-Lys-D-Ala and/or D-Ala-D-Ala peptide bonds. Exerts important effects on mycobacterial cell morphology and cell division. The protein is Carboxypeptidase Rv3627c of Mycobacterium tuberculosis (strain ATCC 25618 / H37Rv).